A 241-amino-acid polypeptide reads, in one-letter code: MLQKTVGIVLHTLNYNDTSNIVDIYTRENGRASFLVSVPRSRKSAVKTVLFQPLSMIEFEADYRPMSNLYRIKEAKSWYPFRTLPYDPYKSSIAMFLAEFLYRALREEAENGPLFAYLEHSIRWLDECDRSFSNFHLVFLMRFSRFLGLYPNTEDYREGCFFDMLNACFVSVRPLHGAFLKPEEASRINLLMRMNYETMHLFTMSRLERNRCLVIMNDYYRLHLPDFPVLKSLDVLKELFS.

The protein belongs to the RecO family.

In terms of biological role, involved in DNA repair and RecF pathway recombination. This chain is DNA repair protein RecO, found in Phocaeicola vulgatus (strain ATCC 8482 / DSM 1447 / JCM 5826 / CCUG 4940 / NBRC 14291 / NCTC 11154) (Bacteroides vulgatus).